The sequence spans 99 residues: Malonate decarboxylase acyl carrier protein (99 aa).

Serine 25 is subject to O-(phosphoribosyl dephospho-coenzyme A)serine.

The protein belongs to the MdcC family. Post-translationally, covalently binds the prosthetic group of malonate decarboxylase.

It is found in the cytoplasm. Subunit of malonate decarboxylase, it is an acyl carrier protein to which acetyl and malonyl thioester residues are bound via a 2'-(5''-phosphoribosyl)-3'-dephospho-CoA prosthetic group and turn over during the catalytic mechanism. This is Malonate decarboxylase acyl carrier protein from Pseudomonas putida (strain GB-1).